Reading from the N-terminus, the 87-residue chain is Sec-independent protein translocase protein TatA (87 aa).

A helical transmembrane segment spans residues 1–21; the sequence is MGSFSITHWLILLVVVVVVFG. The interval 56–87 is disordered; sequence VLDHDAGTNPPNITGTQSDTTSANKVDDTHNV. Positions 64 to 79 are enriched in polar residues; it reads NPPNITGTQSDTTSAN.

It belongs to the TatA/E family. The Tat system comprises two distinct complexes: a TatABC complex, containing multiple copies of TatA, TatB and TatC subunits, and a separate TatA complex, containing only TatA subunits. Substrates initially bind to the TatABC complex, which probably triggers association of the separate TatA complex to form the active translocon.

It localises to the cell inner membrane. Part of the twin-arginine translocation (Tat) system that transports large folded proteins containing a characteristic twin-arginine motif in their signal peptide across membranes. TatA could form the protein-conducting channel of the Tat system. In Psychrobacter arcticus (strain DSM 17307 / VKM B-2377 / 273-4), this protein is Sec-independent protein translocase protein TatA.